The following is a 942-amino-acid chain: PH and SEC7 domain-containing protein C11E3.11c (942 aa).

The segment covering 1–18 (MSRNASNAYLKNGNSTPS) has biased composition (polar residues). Disordered regions lie at residues 1–128 (MSRN…TRLN) and 259–308 (SRNL…ETTR). Positions 24 to 40 (PSSLSQRSKTSTRSSKP) are enriched in low complexity. Composition is skewed to polar residues over residues 50–60 (WFKNESSSRHP), 90–125 (ASMSTNDLPSHPRSQSVMGFSSSTSQLTGTSNSSRT), 271–284 (YGNSRTPLRDSSNY), and 292–305 (NRQSSLSIPKSTSE). Residues 295-497 (SSLSIPKSTS…LSSYKSFASN (203 aa)) enclose the SEC7 domain. The region spanning 681 to 804 (PYIKQGILKF…WIDALNYWAA (124 aa)) is the PH domain.

This is PH and SEC7 domain-containing protein C11E3.11c from Schizosaccharomyces pombe (strain 972 / ATCC 24843) (Fission yeast).